The sequence spans 362 residues: Protein U8 (362 aa).

It belongs to the herpesviridae US22 family.

This Human herpesvirus 7 (strain JI) (HHV-7) protein is Protein U8 (U8).